We begin with the raw amino-acid sequence, 551 residues long: CTP synthase (551 aa).

Residues 1–265 (MTRYLFITGG…DHIVAEKWGL (265 aa)) are amidoligase domain. Ser13 provides a ligand contact to CTP. Residue Ser13 participates in UTP binding. Residues 14–19 (SLGKGI) and Asp71 each bind ATP. Mg(2+) is bound by residues Asp71 and Glu139. CTP is bound by residues 146–148 (DIE), 186–191 (KTKPTQ), and Lys222. UTP-binding positions include 186 to 191 (KTKPTQ) and Lys222. One can recognise a Glutamine amidotransferase type-1 domain in the interval 290-541 (TVAMVGKYVD…LRAAIAHRDG (252 aa)). Gly351 serves as a coordination point for L-glutamine. The Nucleophile; for glutamine hydrolysis role is filled by Cys378. Residues 379-382 (LGMQ), Glu402, and Arg469 contribute to the L-glutamine site. Active-site residues include His514 and Glu516.

It belongs to the CTP synthase family. Homotetramer.

The catalysed reaction is UTP + L-glutamine + ATP + H2O = CTP + L-glutamate + ADP + phosphate + 2 H(+). The enzyme catalyses L-glutamine + H2O = L-glutamate + NH4(+). It catalyses the reaction UTP + NH4(+) + ATP = CTP + ADP + phosphate + 2 H(+). Its pathway is pyrimidine metabolism; CTP biosynthesis via de novo pathway; CTP from UDP: step 2/2. With respect to regulation, allosterically activated by GTP, when glutamine is the substrate; GTP has no effect on the reaction when ammonia is the substrate. The allosteric effector GTP functions by stabilizing the protein conformation that binds the tetrahedral intermediate(s) formed during glutamine hydrolysis. Inhibited by the product CTP, via allosteric rather than competitive inhibition. Its function is as follows. Catalyzes the ATP-dependent amination of UTP to CTP with either L-glutamine or ammonia as the source of nitrogen. Regulates intracellular CTP levels through interactions with the four ribonucleotide triphosphates. This is CTP synthase from Halorhodospira halophila (strain DSM 244 / SL1) (Ectothiorhodospira halophila (strain DSM 244 / SL1)).